We begin with the raw amino-acid sequence, 648 residues long: Macrolide export ATP-binding/permease protein MacB (648 aa).

Residues 5–243 form the ABC transporter domain; it reads LELCNVSRSY…QGVDAAVVNT (239 aa). 41-48 lines the ATP pocket; that stretch reads GVSGSGKS. A run of 5 helical transmembrane segments spans residues 273 to 293, 417 to 437, 523 to 543, 577 to 597, and 611 to 631; these read LLTMLGIIIGIASVVSIVVVG, ANVVGEVVLVGNMPVIVIGVA, LFLTLVAVISLVVGGIGVMNI, VLVCLVGGALGISLSMFIAFM, and LTALASAFLCSTFTGILFGWL.

It belongs to the ABC transporter superfamily. Macrolide exporter (TC 3.A.1.122) family. Homodimer. Part of the tripartite efflux system MacAB-TolC, which is composed of an inner membrane transporter, MacB, a periplasmic membrane fusion protein, MacA, and an outer membrane component, TolC. The complex forms a large protein conduit and can translocate molecules across both the inner and outer membranes. Interacts with MacA.

It localises to the cell inner membrane. Part of the tripartite efflux system MacAB-TolC. MacB is a non-canonical ABC transporter that contains transmembrane domains (TMD), which form a pore in the inner membrane, and an ATP-binding domain (NBD), which is responsible for energy generation. Confers resistance against macrolides. The polypeptide is Macrolide export ATP-binding/permease protein MacB (Salmonella typhi).